The primary structure comprises 124 residues: Small ribosomal subunit protein bS6 (124 aa).

Residues 99–124 form a disordered region; the sequence is PLPAPRVMPGSEAAQQQQAEAAASAD. The span at 109 to 124 shows a compositional bias: low complexity; the sequence is SEAAQQQQAEAAASAD.

The protein belongs to the bacterial ribosomal protein bS6 family.

Functionally, binds together with bS18 to 16S ribosomal RNA. The sequence is that of Small ribosomal subunit protein bS6 from Synechococcus sp. (strain CC9605).